The sequence spans 694 residues: Cyclic nucleotide-gated channel beta-3 (694 aa).

Topologically, residues 1–210 (MLKSLTVKFN…SIDSYTDRVY (210 aa)) are cytoplasmic. Disordered stretches follow at residues 24-82 (CPNL…DPEC) and 146-177 (ENFP…KEHQ). 2 stretches are compositionally biased toward polar residues: residues 26–40 (NLSS…QGDN) and 153–168 (ASSQ…PKQE). Residues 211-234 (LLWLLLVTIAYNWNCWLLPVRLVF) form a helical membrane-spanning segment. Residues 235-241 (PCQTPDN) lie on the Extracellular side of the membrane. Residues 242–262 (KNYWIITDIVCDIIYLCDILL) form a helical membrane-spanning segment. Residues 263-291 (IQPRLQFVRGGEIIVDSNELKRNYRSSTK) are Cytoplasmic-facing. The helical transmembrane segment at 292–309 (FRMDVASLLPFEVLYIFF) threads the bilayer. At 310–312 (GVN) the chain is on the extracellular side. The helical transmembrane segment at 313–327 (PIFRANRILKYTSFF) threads the bilayer. The Cytoplasmic segment spans residues 328–340 (EFNHHLESIMDKA). The ion conduction pathway stretch occupies residues 340 to 439 (AYVYRVIRTT…IGQMRDVIGA (100 aa)). Residues 341-363 (YVYRVIRTTGYLLFLLHINACVY) form a helical membrane-spanning segment. At 364–385 (YWASDYEGIGSTKWVYNGEGNK) the chain is on the extracellular side. 2 helical membrane-spanning segments follow: residues 386–412 (YLRC…SFEI) and 413–437 (VFQF…RDVI). Residues 399–402 (TIGG) form a selectivity filter region. At 438–694 (GAATANQNYF…KGKRKTTTQK (257 aa)) the chain is on the cytoplasmic side. The C-linker stretch occupies residues 442 to 518 (ANQNYFQACM…SIIDKVELFK (77 aa)). Residues 522 to 638 (TQMIYDLLLR…LLMKKAKILL (117 aa)) form a cyclic nucleotide-binding domain region. Residues Gly-583, Glu-584, Arg-596, and Thr-597 each contribute to the 3',5'-cyclic GMP site.

It belongs to the cyclic nucleotide-gated cation channel (TC 1.A.1.5) family. CNGB3 subfamily. Forms heterotetrameric channels composed of CNGA3 and CNGB3 subunits with 3:1 stoichiometry. As to expression, small subset of retinal photoreceptor cells and testis.

Its subcellular location is the cell membrane. It carries out the reaction Ca(2+)(in) = Ca(2+)(out). The catalysed reaction is Na(+)(in) = Na(+)(out). The enzyme catalyses K(+)(in) = K(+)(out). It catalyses the reaction NH4(+)(in) = NH4(+)(out). It carries out the reaction Rb(+)(in) = Rb(+)(out). The catalysed reaction is Li(+)(in) = Li(+)(out). The enzyme catalyses Cs(+)(in) = Cs(+)(out). Its function is as follows. Pore-forming subunit of the cone cyclic nucleotide-gated channel. Mediates cone photoresponses at bright light converting transient changes in intracellular cGMP levels into electrical signals. In the dark, cGMP levels are high and keep the channel open enabling a steady inward current carried by Na(+) and Ca(2+) ions that leads to membrane depolarization and neurotransmitter release from synaptic terminals. Upon photon absorption cGMP levels decline leading to channel closure and membrane hyperpolarization that ultimately slows neurotransmitter release and signals the presence of light, the end point of the phototransduction cascade. Conducts cGMP- and cAMP-gated ion currents, with permeability for monovalent and divalent cations. This is Cyclic nucleotide-gated channel beta-3 from Mus musculus (Mouse).